Here is a 1187-residue protein sequence, read N- to C-terminus: Roquin-2 (1187 aa).

Positions 14, 17, 33, 35, 38, 50, and 53 each coordinate Zn(2+). Residues 14 to 54 (CPICYNEFDENVHKPISLGCSHTVCKTCLNKLHRKACPFDQ) form an RING-type; degenerate zinc finger. The interval 91–170 (ENKHYEVAKK…RTVTELILQH (80 aa)) is HEPN-N. The segment at 171-325 (QNPQQLSANL…SIIDKLQSPE (155 aa)) is ROQ. The tract at residues 326-396 (SFAKSVQELT…GLVDFIQNYS (71 aa)) is HEPN-C. The C3H1-type zinc finger occupies 410-438 (KYKTSMCRDLRQQGGCPRGTNCTFAHSQE). Disordered regions lie at residues 527-571 (VGTN…GTEL) and 640-677 (NVPESSLPPASMPYADHYSTFSPRDRMNSSPYQPPPPQ). Over residues 529–545 (TNAQNAGPSAESVSENK) the composition is skewed to polar residues. A Phosphoserine modification is found at Ser548. Over residues 553–571 (PVSNAAATSAGPSNFGTEL) the composition is skewed to polar residues. Residues Ser806, Ser981, and Ser1115 each carry the phosphoserine modification.

In terms of assembly, interacts with EDC4. Interacts with CCR4-NOT deadenylase complex. Interacts with MAP3K5; the interaction is probably stimulus-dependent. In terms of processing, proteolytically cleaved by MALT1 in activated CD4(+) T cells; cleavage at Arg-509 is critical for promoting RC3H1 degradation in response to T-cell receptor (TCR) stimulation, and hence is necessary for prolonging the stability of a set of mRNAs controlling Th17 cell differentiation. As to expression, highest levels in lymph node and thymus and slightly lesser amounts in brain, lung, and spleen (at protein level). Very weak expression in heart, muscle, and kidney (at protein level). Expressed in CD4(+) helper T-cells (at protein level).

Its subcellular location is the cytoplasm. It localises to the P-body. The enzyme catalyses S-ubiquitinyl-[E2 ubiquitin-conjugating enzyme]-L-cysteine + [acceptor protein]-L-lysine = [E2 ubiquitin-conjugating enzyme]-L-cysteine + N(6)-ubiquitinyl-[acceptor protein]-L-lysine.. Its pathway is protein modification; protein ubiquitination. Its activity is regulated as follows. Binding to dsRNA, but not CDE RNA, crosstalks with the E3 ubiquitin ligase activity and may inhibit ubiquitination. Functionally, post-transcriptional repressor of mRNAs containing a conserved stem loop motif, called constitutive decay element (CDE), which is often located in the 3'-UTR, as in HMGXB3, ICOS, IER3, NFKBID, NFKBIZ, PPP1R10, TNF and in many more mRNAs. Binds to CDE and promotes mRNA deadenylation and degradation. This process does not involve miRNAs. In follicular helper T (Tfh) cells, represses of ICOS and TNFRSF4 expression, thus preventing spontaneous Tfh cell differentiation, germinal center B-cell differentiation in the absence of immunization and autoimmunity. In resting or LPS-stimulated macrophages, controls inflammation by suppressing TNF expression. Also recognizes CDE in its own mRNA and in that of paralogous RC3H1, possibly leading to feedback loop regulation. Inhibits cooperatively with ZC3H12A the differentiation of helper T cells Th17 in lungs. They repress target mRNA encoding the Th17 cell-promoting factors IL6, ICOS, REL, IRF4, NFKBID and NFKBIZ. The cooperation requires RNA-binding by RC3H1 and the nuclease activity of ZC3H12A. miRNA-binding protein that regulates microRNA homeostasis. Enhances DICER-mediated processing of pre-MIR146a but reduces mature MIR146a levels through an increase of 3' end uridylation. Both inhibits ICOS mRNA expression and they may act together to exert the suppression. Acts as a ubiquitin E3 ligase. Pairs with E2 enzymes UBE2B, UBE2D2, UBE2E2, UBE2E3, UBE2G2, UBE2K and UBE2Q2 and produces polyubiquitin chains. Shows the strongest activity when paired with UBE2N:UBE2V1 or UBE2N:UBE2V2 E2 complexes and generate both short and long polyubiquitin chains. Involved in the ubiquitination of MAP3K5. Able to interact with double-stranded RNA (dsRNA). This Mus musculus (Mouse) protein is Roquin-2 (Rc3h2).